A 350-amino-acid chain; its full sequence is Type II restriction enzyme NgoBI (350 aa).

It catalyses the reaction Endonucleolytic cleavage of DNA to give specific double-stranded fragments with terminal 5'-phosphates.. Functionally, a P subtype restriction enzyme that recognizes the double-stranded sequence 5'-RGCGCY-3'; the cleavage site is unknown. In Neisseria gonorrhoeae, this protein is Type II restriction enzyme NgoBI (ngoBIR).